Here is a 433-residue protein sequence, read N- to C-terminus: Phosphoribosylamine--glycine ligase (433 aa).

Residues 110–317 form the ATP-grasp domain; it reads RNFMKKYGIE…FVDIMSAVVK (208 aa). 137-194 is a binding site for ATP; sequence IEKLGDVAVKPSGLTGGKGVKVMGDQLPDLKAAKAYTSELLEKGSVVIEERFIGEEFT. The Mg(2+) site is built by Q275, E287, and N289. Residues Q275, E287, and N289 each contribute to the Mn(2+) site.

Belongs to the GARS family. It depends on Mg(2+) as a cofactor. The cofactor is Mn(2+).

The enzyme catalyses 5-phospho-beta-D-ribosylamine + glycine + ATP = N(1)-(5-phospho-beta-D-ribosyl)glycinamide + ADP + phosphate + H(+). It functions in the pathway purine metabolism; IMP biosynthesis via de novo pathway; N(1)-(5-phospho-D-ribosyl)glycinamide from 5-phospho-alpha-D-ribose 1-diphosphate: step 2/2. In Methanosarcina barkeri (strain Fusaro / DSM 804), this protein is Phosphoribosylamine--glycine ligase.